A 376-amino-acid chain; its full sequence is Heme chaperone HemW (376 aa).

Residues 1–233 (MFTLPPISLY…DKLLKKAGYK (233 aa)) enclose the Radical SAM core domain. Residue Y10 participates in S-adenosyl-L-methionine binding. C16, C20, and C23 together coordinate [4Fe-4S] cluster. Residues G66, 67-68 (GT), E99, Q126, R138, and D162 contribute to the S-adenosyl-L-methionine site.

The protein belongs to the anaerobic coproporphyrinogen-III oxidase family. HemW subfamily. The cofactor is [4Fe-4S] cluster.

Its subcellular location is the cytoplasm. Functionally, probably acts as a heme chaperone, transferring heme to an unknown acceptor. Binds one molecule of heme per monomer, possibly covalently. Binds 1 [4Fe-4S] cluster. The cluster is coordinated with 3 cysteines and an exchangeable S-adenosyl-L-methionine. The polypeptide is Heme chaperone HemW (Buchnera aphidicola subsp. Acyrthosiphon pisum (strain APS) (Acyrthosiphon pisum symbiotic bacterium)).